The sequence spans 237 residues: Survival of motor neuron-related-splicing factor 30 (237 aa).

Over residues 52-69 the composition is skewed to polar residues; that stretch reads SQPAEGTTSTKSSETVAP. Disordered stretches follow at residues 52-73 and 149-198; these read SQPA…SHSW and REYK…RSIF. Residues 72-132 form the Tudor domain; that stretch reads SWRVGDHCMA…KKVEEGRIRD (61 aa). The Nuclear localization signal signature appears at 142–160; the sequence is KELQAEQREYKKKKAQKKV. Positions 151–161 are enriched in basic residues; it reads YKKKKAQKKVQ. The span at 162–175 shows a compositional bias: basic and acidic residues; the sequence is RMKELEQEREDQKS. The span at 176 to 185 shows a compositional bias: polar residues; the sequence is KWQQFNNKAY.

Belongs to the SMN family. In terms of assembly, associates with spliceosomes.

It localises to the nucleus speckle. The protein resides in the nucleus. Its subcellular location is the cajal body. In terms of biological role, involved in spliceosome assembly. In Danio rerio (Zebrafish), this protein is Survival of motor neuron-related-splicing factor 30 (smndc1).